A 272-amino-acid chain; its full sequence is Methylsterol monooxygenase 2-1 (272 aa).

Transmembrane regions (helical) follow at residues Ile-24 to Leu-44, Leu-72 to Met-94, and Val-107 to His-127. Positions Leu-113–Thr-259 constitute a Fatty acid hydroxylase domain. A Histidine box-1 motif is present at residues His-127 to His-131. The Histidine box-2 motif lies at His-140–His-144. Helical transmembrane passes span Ile-162–Thr-182 and Asn-209–Ala-229. The Histidine box-3 motif lies at Phe-231 to Arg-237.

Belongs to the sterol desaturase family. Fe cation serves as cofactor. In terms of tissue distribution, strongly expressed in leaves, flowers, siliques and developing seeds.

Its subcellular location is the endoplasmic reticulum membrane. The enzyme catalyses 4,4-dimethyl-5alpha-cholest-7-en-3beta-ol + 6 Fe(II)-[cytochrome b5] + 3 O2 + 5 H(+) = 4alpha-carboxy-4beta-methyl-5alpha-cholest-7-ene-3beta-ol + 6 Fe(III)-[cytochrome b5] + 4 H2O. The catalysed reaction is 24-methylidenelophenol + 6 Fe(II)-[cytochrome b5] + 3 O2 + 5 H(+) = 4alpha-carboxy-ergosta-7,24(24(1))-dien-3beta-ol + 6 Fe(III)-[cytochrome b5] + 4 H2O. Non-heme iron oxygenase involved in sterols biosynthesis by catalyzing the removal of the second methyl group at the C-4 position. 24-ethylidenelophenol and 24-ethyllophenol are the preferred substrates. Together with SMO2-2, required during embryogenesis, probably by maintaining sterols and auxin homeostasis. The polypeptide is Methylsterol monooxygenase 2-1 (Arabidopsis thaliana (Mouse-ear cress)).